The sequence spans 177 residues: Probable chemoreceptor glutamine deamidase CheD (177 aa).

The protein belongs to the CheD family.

The catalysed reaction is L-glutaminyl-[protein] + H2O = L-glutamyl-[protein] + NH4(+). Its function is as follows. Probably deamidates glutamine residues to glutamate on methyl-accepting chemotaxis receptors (MCPs), playing an important role in chemotaxis. The protein is Probable chemoreceptor glutamine deamidase CheD of Pseudomonas savastanoi pv. phaseolicola (strain 1448A / Race 6) (Pseudomonas syringae pv. phaseolicola (strain 1448A / Race 6)).